A 447-amino-acid polypeptide reads, in one-letter code: Phosphoglucosamine mutase (447 aa).

S103 serves as the catalytic Phosphoserine intermediate. Residues S103, D242, D244, and D246 each contribute to the Mg(2+) site. S103 is modified (phosphoserine).

Belongs to the phosphohexose mutase family. The cofactor is Mg(2+). In terms of processing, activated by phosphorylation.

The enzyme catalyses alpha-D-glucosamine 1-phosphate = D-glucosamine 6-phosphate. Functionally, catalyzes the conversion of glucosamine-6-phosphate to glucosamine-1-phosphate. This chain is Phosphoglucosamine mutase, found in Cereibacter sphaeroides (strain ATCC 17023 / DSM 158 / JCM 6121 / CCUG 31486 / LMG 2827 / NBRC 12203 / NCIMB 8253 / ATH 2.4.1.) (Rhodobacter sphaeroides).